Here is a 217-residue protein sequence, read N- to C-terminus: MMKQKLSLYFVMGSIDCTKDPLAVLDEAIKGGITMFQFREKGKGALTGIEKYRLAEKLLERCRMYNIPFIVNDDVDLALALQADGVHVGQEDEVAERVRDRIGDKYLGVSVHNLNEVKKALAACADYVGLGPIFPTVSKEDAKQACGLTMIEHIRAHEKRVPLVAIGGITEQTAKQVIEAGADGIAVISAICRAEHIYEQTKRLYEMVMRAKQKGDR.

4-amino-2-methyl-5-(diphosphooxymethyl)pyrimidine-binding positions include 37–41 (QFREK) and Asn-72. Mg(2+) contacts are provided by Asp-73 and Asp-92. Position 110 (Ser-110) interacts with 4-amino-2-methyl-5-(diphosphooxymethyl)pyrimidine. 2-[(2R,5Z)-2-carboxy-4-methylthiazol-5(2H)-ylidene]ethyl phosphate is bound at residue 136-138 (TVS). 4-amino-2-methyl-5-(diphosphooxymethyl)pyrimidine is bound at residue Lys-139. 2-[(2R,5Z)-2-carboxy-4-methylthiazol-5(2H)-ylidene]ethyl phosphate-binding positions include Gly-168 and 188-189 (IS).

It belongs to the thiamine-phosphate synthase family. Requires Mg(2+) as cofactor.

It catalyses the reaction 2-[(2R,5Z)-2-carboxy-4-methylthiazol-5(2H)-ylidene]ethyl phosphate + 4-amino-2-methyl-5-(diphosphooxymethyl)pyrimidine + 2 H(+) = thiamine phosphate + CO2 + diphosphate. The catalysed reaction is 2-(2-carboxy-4-methylthiazol-5-yl)ethyl phosphate + 4-amino-2-methyl-5-(diphosphooxymethyl)pyrimidine + 2 H(+) = thiamine phosphate + CO2 + diphosphate. It carries out the reaction 4-methyl-5-(2-phosphooxyethyl)-thiazole + 4-amino-2-methyl-5-(diphosphooxymethyl)pyrimidine + H(+) = thiamine phosphate + diphosphate. The protein operates within cofactor biosynthesis; thiamine diphosphate biosynthesis; thiamine phosphate from 4-amino-2-methyl-5-diphosphomethylpyrimidine and 4-methyl-5-(2-phosphoethyl)-thiazole: step 1/1. Condenses 4-methyl-5-(beta-hydroxyethyl)thiazole monophosphate (THZ-P) and 2-methyl-4-amino-5-hydroxymethyl pyrimidine pyrophosphate (HMP-PP) to form thiamine monophosphate (TMP). This is Thiamine-phosphate synthase from Anoxybacillus flavithermus (strain DSM 21510 / WK1).